Reading from the N-terminus, the 136-residue chain is MKPAARRKARILALQAIYSWQLSGNAIADIEQQMLIENDVTKIDVEYFKDLASGVAVNYKQLDEAVSPHLTRPFDELDMVERAILRLSSYELKFREDVPYKVAINESIELAKMFGAEDSHKFVNGVLDKAVKHLRK.

This sequence belongs to the NusB family.

Its function is as follows. Involved in transcription antitermination. Required for transcription of ribosomal RNA (rRNA) genes. Binds specifically to the boxA antiterminator sequence of the ribosomal RNA (rrn) operons. This is Transcription antitermination protein NusB from Pseudoalteromonas translucida (strain TAC 125).